The primary structure comprises 215 residues: Large ribosomal subunit protein uL3 (215 aa).

The interval 136-155 (GVSISHRSHGSTGQRQDPGK) is disordered. Glutamine 151 is modified (N5-methylglutamine).

It belongs to the universal ribosomal protein uL3 family. In terms of assembly, part of the 50S ribosomal subunit. Forms a cluster with proteins L14 and L19. In terms of processing, methylated by PrmB.

One of the primary rRNA binding proteins, it binds directly near the 3'-end of the 23S rRNA, where it nucleates assembly of the 50S subunit. In Rickettsia conorii (strain ATCC VR-613 / Malish 7), this protein is Large ribosomal subunit protein uL3.